The sequence spans 319 residues: MSTINGCLTSISPSRTQLKNTSTLRPTFIANSRVNPSSSVPPSLIRNQPVFAAPAPIITPTLKEDMAYEEAIAALKKLLSEKGELENEAASKVAQITSELADGGTPSASYPVQRIKEGFIKFKKEKYEKNPALYGELSKGQAPKFMVFACSDSRVCPSHVLDFQPGEAFMVRNIANMVPVFDKDKYAGVGAAIEYAVLHLKVENIVVIGHSACGGIKGLMSFPDAGPTTTDFIEDWVKICLPAKHKVLAEHGNATFAEQCTHCEKEAVNVSLGNLLTYPFVRDGLVKKTLALQGGYYDFVNGSFELWGLEYGLSPSQSV.

The transit peptide at 1–98 directs the protein to the chloroplast; the sequence is MSTINGCLTS…AASKVAQITS (98 aa).

Belongs to the beta-class carbonic anhydrase family. Homohexamer.

The protein localises to the plastid. It is found in the chloroplast stroma. It carries out the reaction hydrogencarbonate + H(+) = CO2 + H2O. In terms of biological role, reversible hydration of carbon dioxide. The chain is Carbonic anhydrase, chloroplastic from Spinacia oleracea (Spinach).